The sequence spans 87 residues: Conotoxin Bt15a (87 aa).

An N-terminal signal peptide occupies residues 1-23 (MEKLTILVLVATVLLAIQVLVQS). A propeptide spanning residues 24–49 (DGEKPLKRRVKQYAAKRLSALMRGPR) is cleaved from the precursor. Glutamine 50 is modified (pyrrolidone carboxylic acid).

This sequence belongs to the conotoxin O2 superfamily. Contains 4 disulfide bonds. In terms of tissue distribution, expressed by the venom duct.

The protein resides in the secreted. The chain is Conotoxin Bt15a from Conus betulinus (Beech cone).